A 515-amino-acid chain; its full sequence is Lysosomal acid glucosylceramidase (515 aa).

The signal sequence occupies residues 1–19 (MAARLIGFFLFQAVSWAYG). Intrachain disulfides connect Cys-23–Cys-35 and Cys-37–Cys-42. N-linked (GlcNAc...) asparagine glycans are attached at residues Asn-38 and Asn-78. Residue Asn-165 is glycosylated (N-linked (GlcNAc...) (high mannose) asparagine). Catalysis depends on Glu-254, which acts as the Proton donor. Asn-289 carries N-linked (GlcNAc...) asparagine glycosylation. Residue Glu-358 is the Nucleophile of the active site. Asn-480 carries an N-linked (GlcNAc...) asparagine glycan.

It belongs to the glycosyl hydrolase 30 family. As to quaternary structure, interacts with saposin-C. Interacts with SCARB2. Interacts with TCP1. Interacts with GRN; this interaction prevents aggregation of GBA1-SCARB2 complex via interaction with HSPA1A upon stress.

The protein resides in the lysosome membrane. The catalysed reaction is a beta-D-glucosyl-(1&lt;-&gt;1')-N-acylsphing-4-enine + H2O = an N-acylsphing-4-enine + D-glucose. It catalyses the reaction a beta-D-galactosyl-(1&lt;-&gt;1')-N-acylsphing-4-enine + H2O = an N-acylsphing-4-enine + D-galactose. It carries out the reaction cholesteryl 3-beta-D-glucoside + H2O = cholesterol + D-glucose. The enzyme catalyses a beta-D-glucosyl-(1&lt;-&gt;1')-N-acylsphing-4-enine + cholesterol = cholesteryl 3-beta-D-glucoside + an N-acylsphing-4-enine. The catalysed reaction is beta-D-glucosyl-(1&lt;-&gt;1')-N-hexadecanoylsphing-4-enine + cholesterol = cholesteryl 3-beta-D-glucoside + N-hexadecanoylsphing-4-enine. It catalyses the reaction beta-D-glucosyl-N-(9Z-octadecenoyl)-sphing-4E-enine + cholesterol = N-(9Z-octadecenoyl)-sphing-4-enine + cholesteryl 3-beta-D-glucoside. It carries out the reaction beta-D-glucosyl-N-octanoylsphing-4E-enine + cholesterol = N-octanoylsphing-4-enine + cholesteryl 3-beta-D-glucoside. The enzyme catalyses beta-D-glucosyl-N-dodecanoylsphing-4-enine + cholesterol = N-dodecanoylsphing-4-enine + cholesteryl 3-beta-D-glucoside. The catalysed reaction is beta-D-glucosyl-(1&lt;-&gt;1)-N-octadecanoylsphing-4-enine + cholesterol = N-octadecanoylsphing-4-enine + cholesteryl 3-beta-D-glucoside. It catalyses the reaction beta-D-glucosyl-(1&lt;-&gt;1')-N-(15Z-tetracosenoyl)-sphing-4-enine + cholesterol = N-(15Z-tetracosenoyl)-sphing-4-enine + cholesteryl 3-beta-D-glucoside. It carries out the reaction a beta-D-galactosyl-(1&lt;-&gt;1')-N-acylsphing-4-enine + cholesterol = cholesteryl 3-beta-D-galactoside + an N-acylsphing-4-enine. The enzyme catalyses 1-(beta-D-galactosyl)-N-dodecanoylsphing-4-enine + cholesterol = cholesteryl 3-beta-D-galactoside + N-dodecanoylsphing-4-enine. The catalysed reaction is a beta-D-xylosyl-(1&lt;-&gt;1')-N-acylsphing-4-enine + cholesterol = cholesteryl 3-beta-D-xyloside + an N-acylsphing-4-enine. It catalyses the reaction beta-D-xylosyl-(1&lt;-&gt;1')-N-(9Z-octadecenoyl)-sphing-4-enine + cholesterol = cholesteryl 3-beta-D-xyloside + N-(9Z-octadecenoyl)-sphing-4-enine. It participates in steroid metabolism; cholesterol metabolism. The protein operates within sphingolipid metabolism. Its activity is regulated as follows. Inhibited by conduritol B epoxide/CBE. Functionally, glucosylceramidase that catalyzes, within the lysosomal compartment, the hydrolysis of glucosylceramides/GlcCers (such as beta-D-glucosyl-(1&lt;-&gt;1')-N-acylsphing-4-enine) into free ceramides (such as N-acylsphing-4-enine) and glucose. Plays a central role in the degradation of complex lipids and the turnover of cellular membranes. Through the production of ceramides, participates in the PKC-activated salvage pathway of ceramide formation. Catalyzes the glucosylation of cholesterol, through a transglucosylation reaction where glucose is transferred from GlcCer to cholesterol. GlcCer containing mono-unsaturated fatty acids (such as beta-D-glucosyl-N-(9Z-octadecenoyl)-sphing-4-enine) are preferred as glucose donors for cholesterol glucosylation when compared with GlcCer containing same chain length of saturated fatty acids (such as beta-D-glucosyl-N-octadecanoyl-sphing-4-enine). Under specific conditions, may alternatively catalyze the reverse reaction, transferring glucose from cholesteryl 3-beta-D-glucoside to ceramide. Can also hydrolyze cholesteryl 3-beta-D-glucoside producing glucose and cholesterol. Catalyzes the hydrolysis of galactosylceramides/GalCers (such as beta-D-galactosyl-(1&lt;-&gt;1')-N-acylsphing-4-enine), as well as the transfer of galactose between GalCers and cholesterol in vitro, but with lower activity than with GlcCers. Contrary to GlcCer and GalCer, xylosylceramide/XylCer (such as beta-D-xyosyl-(1&lt;-&gt;1')-N-acylsphing-4-enine) is not a good substrate for hydrolysis, however it is a good xylose donor for transxylosylation activity to form cholesteryl 3-beta-D-xyloside. In Mus musculus (Mouse), this protein is Lysosomal acid glucosylceramidase (Gba1).